The primary structure comprises 104 residues: MAGKMKIRRNDSVEIIAGKERGKRGEVVKVLQEDNKVIVGGLNMIKKAMRKRSQQDQGGIVEIEAPISASNVMVICKKCGKTRIAYEIKDGKKTRICRKCGEAL.

It belongs to the universal ribosomal protein uL24 family. In terms of assembly, part of the 50S ribosomal subunit.

Its function is as follows. One of two assembly initiator proteins, it binds directly to the 5'-end of the 23S rRNA, where it nucleates assembly of the 50S subunit. In terms of biological role, one of the proteins that surrounds the polypeptide exit tunnel on the outside of the subunit. This chain is Large ribosomal subunit protein uL24, found in Treponema denticola (strain ATCC 35405 / DSM 14222 / CIP 103919 / JCM 8153 / KCTC 15104).